Here is a 156-residue protein sequence, read N- to C-terminus: Small ribosomal subunit protein bS16 (156 aa).

Residues 114–156 (ENEPVAEAITPKKKKAAKADEAKAEDTAADAEAPAADAEAADK) are disordered. The span at 130–139 (AKADEAKAED) shows a compositional bias: basic and acidic residues. Positions 143–156 (DAEAPAADAEAADK) are enriched in low complexity.

The protein belongs to the bacterial ribosomal protein bS16 family.

The sequence is that of Small ribosomal subunit protein bS16 from Rhodococcus erythropolis (strain PR4 / NBRC 100887).